Reading from the N-terminus, the 688-residue chain is Elongation factor G (688 aa).

Positions 8-282 constitute a tr-type G domain; sequence EKTRNIGIMA…AIIDYLPSPM (275 aa). GTP is bound by residues 17–24, 81–85, and 135–138; these read AHIDAGKT, DTPGH, and NKMD.

Belongs to the TRAFAC class translation factor GTPase superfamily. Classic translation factor GTPase family. EF-G/EF-2 subfamily.

The protein resides in the cytoplasm. Functionally, catalyzes the GTP-dependent ribosomal translocation step during translation elongation. During this step, the ribosome changes from the pre-translocational (PRE) to the post-translocational (POST) state as the newly formed A-site-bound peptidyl-tRNA and P-site-bound deacylated tRNA move to the P and E sites, respectively. Catalyzes the coordinated movement of the two tRNA molecules, the mRNA and conformational changes in the ribosome. This is Elongation factor G (fusA) from Apple proliferation phytoplasma.